Consider the following 615-residue polypeptide: Dihydroxy-acid dehydratase (615 aa).

Asp-85 serves as a coordination point for Mg(2+). Cys-126 provides a ligand contact to [2Fe-2S] cluster. Mg(2+) is bound by residues Asp-127 and Lys-128. Lys-128 is subject to N6-carboxylysine. Residue Cys-199 coordinates [2Fe-2S] cluster. Residue Glu-495 coordinates Mg(2+). Ser-521 serves as the catalytic Proton acceptor.

This sequence belongs to the IlvD/Edd family. In terms of assembly, homodimer. It depends on [2Fe-2S] cluster as a cofactor. The cofactor is Mg(2+).

The catalysed reaction is (2R)-2,3-dihydroxy-3-methylbutanoate = 3-methyl-2-oxobutanoate + H2O. The enzyme catalyses (2R,3R)-2,3-dihydroxy-3-methylpentanoate = (S)-3-methyl-2-oxopentanoate + H2O. The protein operates within amino-acid biosynthesis; L-isoleucine biosynthesis; L-isoleucine from 2-oxobutanoate: step 3/4. It functions in the pathway amino-acid biosynthesis; L-valine biosynthesis; L-valine from pyruvate: step 3/4. In terms of biological role, functions in the biosynthesis of branched-chain amino acids. Catalyzes the dehydration of (2R,3R)-2,3-dihydroxy-3-methylpentanoate (2,3-dihydroxy-3-methylvalerate) into 2-oxo-3-methylpentanoate (2-oxo-3-methylvalerate) and of (2R)-2,3-dihydroxy-3-methylbutanoate (2,3-dihydroxyisovalerate) into 2-oxo-3-methylbutanoate (2-oxoisovalerate), the penultimate precursor to L-isoleucine and L-valine, respectively. The polypeptide is Dihydroxy-acid dehydratase (Mannheimia succiniciproducens (strain KCTC 0769BP / MBEL55E)).